The sequence spans 101 residues: MIKSELVQRIAEHNPHLYQRDVENIVNAILDEIVTALARGDRVELRGFGAFSVKHRPARAGRNPRTGEHVPVDQKSVPFFKTGKEMRERLNRENATSEASA.

Belongs to the bacterial histone-like protein family. Heterodimer of an alpha and a beta chain.

This protein is one of the two subunits of integration host factor, a specific DNA-binding protein that functions in genetic recombination as well as in transcriptional and translational control. The chain is Integration host factor subunit beta from Nitrobacter hamburgensis (strain DSM 10229 / NCIMB 13809 / X14).